A 379-amino-acid polypeptide reads, in one-letter code: Deoxyhypusine synthase (379 aa).

NAD(+) is bound by residues 108–112 (SNLIS), 134–136 (TAG), E140, and D257. 139–140 (EE) provides a ligand contact to spermidine. Residue D262 participates in spermidine binding. G304 provides a ligand contact to NAD(+). H309 contacts spermidine. Residue 329-330 (TG) coordinates NAD(+). Spermidine is bound by residues 335-337 (GSD) and 344-350 (EAVSWGK). The active-site Nucleophile is the K350. 363-364 (DA) contacts NAD(+).

Belongs to the deoxyhypusine synthase family. The cofactor is NAD(+).

The catalysed reaction is [eIF5A protein]-L-lysine + spermidine = [eIF5A protein]-deoxyhypusine + propane-1,3-diamine. Its pathway is protein modification; eIF5A hypusination. Catalyzes the NAD-dependent oxidative cleavage of spermidine and the subsequent transfer of the butylamine moiety of spermidine to the epsilon-amino group of a specific lysine residue of the eIF-5A precursor protein to form the intermediate deoxyhypusine residue. The protein is Deoxyhypusine synthase (DYS1) of Kluyveromyces lactis (strain ATCC 8585 / CBS 2359 / DSM 70799 / NBRC 1267 / NRRL Y-1140 / WM37) (Yeast).